The primary structure comprises 364 residues: mRNA decay activator protein ZFP36L2-B (364 aa).

Over residues 102 to 111 (SFSENGERSQ) the composition is skewed to basic and acidic residues. The segment at 102–129 (SFSENGERSQHLLHLQQQQQQQKAGAQV) is disordered. Residues 113–123 (LLHLQQQQQQQ) are compositionally biased toward low complexity. Positions 133–138 (RYKTEL) match the RNA-binding motif. C3H1-type zinc fingers lie at residues 133 to 161 (RYKT…HGFH) and 171 to 199 (KYKT…HNAE). The RNA-binding stretch occupies residues 150-191 (YGEKCQFAHGFHELRSLTRHPKYKTELCRTFHTIGFCPYGPR). Residues 308 to 350 (SESPVFDAPPSPPDSLSDRDSYLSGSLSSGSLSGSDSPTLDSN) form a disordered region. The span at 329-348 (YLSGSLSSGSLSGSDSPTLD) shows a compositional bias: low complexity.

In terms of processing, phosphorylated. Remains unlocalized in the egg and early embryo. From stage 21 (late neurula), expressed around the pronephros in the anterior crests, pharyngeal arch, hindbrain, mesodermal tissues around the pronephros and tail-bud. This expression pattern is maintained up to the tadpole stage.

The protein localises to the nucleus. It is found in the cytoplasm. In terms of biological role, zinc-finger RNA-binding protein that destabilizes several cytoplasmic AU-rich element (ARE)-containing mRNA transcripts by promoting their poly(A) tail removal or deadenylation, and hence provide a mechanism for attenuating protein synthesis. Acts as a 3'-untranslated region (UTR) ARE mRNA-binding adapter protein to communicate signaling events to the mRNA decay machinery. Functions by recruiting the CCR4-NOT deadenylase complex and probably other components of the cytoplasmic RNA decay machinery to the bound ARE-containing mRNAs, and hence promotes ARE-mediated mRNA deadenylation and decay processes. Binds to 3'-UTR ARE of numerous mRNAs. Also induces the degradation of ARE-containing mRNAs even in absence of poly(A) tail. Required for tubulogenesis during pronephros development. The sequence is that of mRNA decay activator protein ZFP36L2-B (zfp36l2-B) from Xenopus laevis (African clawed frog).